Reading from the N-terminus, the 643-residue chain is Sodium-dependent nutrient amino acid transporter 1 (643 aa).

Residues 1-38 (MELKGVQPSNGSPNGNGNGATNAASTEKTDAEKPTAER) are disordered. Residues 1-40 (MELKGVQPSNGSPNGNGNGATNAASTEKTDAEKPTAERTN) lie on the Cytoplasmic side of the membrane. The segment covering 8–26 (PSNGSPNGNGNGATNAAST) has biased composition (low complexity). Over residues 27–36 (EKTDAEKPTA) the composition is skewed to basic and acidic residues. A run of 3 helical transmembrane segments spans residues 41–61 (WGNG…LGNV), 74–94 (GAFL…MYYL), and 111–131 (SVVP…ICII). N-linked (GlcNAc...) asparagine glycosylation is found at asparagine 185, asparagine 190, and asparagine 200. The next 9 helical transmembrane spans lie at 231 to 251 (PDWK…LVIM), 260 to 280 (AAYF…IRAV), 309 to 329 (AVVQ…MFAS), 343 to 363 (IVTT…FAIL), 403 to 423 (LFSV…IVAL), 449 to 469 (VCGF…ILTL), 476 to 496 (TYVV…VYGL), 518 to 538 (CWSF…MATI), and 554 to 574 (VAGW…GLWY).

This sequence belongs to the sodium:neurotransmitter symporter (SNF) (TC 2.A.22) family.

It localises to the membrane. Unusual broad substrate spectrum amino acid:sodium cotransporter that promotes absorption of the D isomers of essential amino acids. Neutral amino acids are the preferred substrates, especially methionine and phenylalanine. The sequence is that of Sodium-dependent nutrient amino acid transporter 1 from Drosophila simulans (Fruit fly).